The sequence spans 807 residues: Putative histidine biosynthesis bifunctional protein HisCD (807 aa).

A histidinol dehydrogenase region spans residues 1 to 440; that stretch reads MTDHFDTLIR…ALNIAGQGVN (440 aa). Gln-261 and His-264 together coordinate Zn(2+). Catalysis depends on residues Glu-328 and His-329. Residues Asp-362 and His-421 each contribute to the Zn(2+) site. The tract at residues 441–807 is histidinol-phosphate aminotransferase; that stretch reads MNNIFDANLL…VNEQPKEIAN (367 aa). Lys-655 is modified (N6-(pyridoxal phosphate)lysine).

The protein in the N-terminal section; belongs to the histidinol dehydrogenase family. In the C-terminal section; belongs to the class-II pyridoxal-phosphate-dependent aminotransferase family. Histidinol-phosphate aminotransferase subfamily. In terms of assembly, homodimer. Zn(2+) is required as a cofactor. It depends on pyridoxal 5'-phosphate as a cofactor.

The catalysed reaction is L-histidinol phosphate + 2-oxoglutarate = 3-(imidazol-4-yl)-2-oxopropyl phosphate + L-glutamate. It carries out the reaction L-histidinol + 2 NAD(+) + H2O = L-histidine + 2 NADH + 3 H(+). Its pathway is amino-acid biosynthesis; L-histidine biosynthesis; L-histidine from 5-phospho-alpha-D-ribose 1-diphosphate: step 7/9. The protein operates within amino-acid biosynthesis; L-histidine biosynthesis; L-histidine from 5-phospho-alpha-D-ribose 1-diphosphate: step 9/9. Functionally, catalyzes the sequential NAD-dependent oxidations of L-histidinol to L-histidinaldehyde and then to L-histidine. This is Putative histidine biosynthesis bifunctional protein HisCD (hisCD) from Photorhabdus laumondii subsp. laumondii (strain DSM 15139 / CIP 105565 / TT01) (Photorhabdus luminescens subsp. laumondii).